Consider the following 743-residue polypeptide: Cap-specific mRNA (nucleoside-2'-O-)-methyltransferase 2 (743 aa).

One can recognise an Adrift-type SAM-dependent 2'-O-MTase domain in the interval 113–326; the sequence is ELCTQAWAKF…LYIVCLDYQA (214 aa). Lys-121 is an active-site residue. Residues Gly-152, Trp-171, and Asp-239 each contribute to the S-adenosyl-L-methionine site. Asp-239 is a catalytic residue. Catalysis depends on Lys-279, which acts as the Proton acceptor.

Its subcellular location is the nucleus. The protein localises to the cytoplasm. It carries out the reaction a 5'-end (N(7)-methyl 5'-triphosphoguanosine)-(2'-O-methyl-ribonucleoside)-(ribonucleotide) in mRNA + S-adenosyl-L-methionine = a 5'-end (N(7)-methyl 5'-triphosphoguanosine)-(2'-O-methyl-ribonucleoside)-(2'-O-methyl-ribonucleotide) in mRNA + S-adenosyl-L-homocysteine + H(+). S-adenosyl-L-methionine-dependent methyltransferase that mediates mRNA cap2 2'-O-ribose methylation to the 5'-cap structure of mRNAs. Methylates the ribose of the second nucleotide of a m(7)GpppG-capped mRNA and small nuclear RNA (snRNA) (cap0) to produce m(7)GpppRmpNm (cap2). In Danio rerio (Zebrafish), this protein is Cap-specific mRNA (nucleoside-2'-O-)-methyltransferase 2 (cmtr2).